We begin with the raw amino-acid sequence, 153 residues long: Glutamyl-tRNA(Gln) amidotransferase subunit C, mitochondrial (153 aa).

Residues 31–55 (HPTKVPQQPEPNAFPDLDNNTDDDP) form a disordered region.

This sequence belongs to the GatC family. As to quaternary structure, subunit of the heterotrimeric GatCAB amidotransferase (AdT) complex, composed of A, B and C subunits.

The protein resides in the mitochondrion. It catalyses the reaction L-glutamyl-tRNA(Gln) + L-glutamine + ATP + H2O = L-glutaminyl-tRNA(Gln) + L-glutamate + ADP + phosphate + H(+). In terms of biological role, allows the formation of correctly charged Gln-tRNA(Gln) through the transamidation of misacylated Glu-tRNA(Gln) in the mitochondria. The reaction takes place in the presence of glutamine and ATP through an activated gamma-phospho-Glu-tRNA(Gln). The chain is Glutamyl-tRNA(Gln) amidotransferase subunit C, mitochondrial from Drosophila willistoni (Fruit fly).